Consider the following 311-residue polypeptide: 4-hydroxy-3-methylbut-2-enyl diphosphate reductase (311 aa).

[4Fe-4S] cluster is bound at residue Cys-12. His-41 and His-74 together coordinate (2E)-4-hydroxy-3-methylbut-2-enyl diphosphate. Dimethylallyl diphosphate is bound by residues His-41 and His-74. Isopentenyl diphosphate contacts are provided by His-41 and His-74. A [4Fe-4S] cluster-binding site is contributed by Cys-96. A (2E)-4-hydroxy-3-methylbut-2-enyl diphosphate-binding site is contributed by His-124. His-124 is a binding site for dimethylallyl diphosphate. Residue His-124 coordinates isopentenyl diphosphate. Glu-126 functions as the Proton donor in the catalytic mechanism. Residue Thr-167 participates in (2E)-4-hydroxy-3-methylbut-2-enyl diphosphate binding. A [4Fe-4S] cluster-binding site is contributed by Cys-197. Positions 225, 226, 227, and 269 each coordinate (2E)-4-hydroxy-3-methylbut-2-enyl diphosphate. Ser-225, Ser-226, Asn-227, and Ser-269 together coordinate dimethylallyl diphosphate. Isopentenyl diphosphate-binding residues include Ser-225, Ser-226, Asn-227, and Ser-269.

The protein belongs to the IspH family. [4Fe-4S] cluster serves as cofactor.

It catalyses the reaction isopentenyl diphosphate + 2 oxidized [2Fe-2S]-[ferredoxin] + H2O = (2E)-4-hydroxy-3-methylbut-2-enyl diphosphate + 2 reduced [2Fe-2S]-[ferredoxin] + 2 H(+). It carries out the reaction dimethylallyl diphosphate + 2 oxidized [2Fe-2S]-[ferredoxin] + H2O = (2E)-4-hydroxy-3-methylbut-2-enyl diphosphate + 2 reduced [2Fe-2S]-[ferredoxin] + 2 H(+). Its pathway is isoprenoid biosynthesis; dimethylallyl diphosphate biosynthesis; dimethylallyl diphosphate from (2E)-4-hydroxy-3-methylbutenyl diphosphate: step 1/1. It participates in isoprenoid biosynthesis; isopentenyl diphosphate biosynthesis via DXP pathway; isopentenyl diphosphate from 1-deoxy-D-xylulose 5-phosphate: step 6/6. Catalyzes the conversion of 1-hydroxy-2-methyl-2-(E)-butenyl 4-diphosphate (HMBPP) into a mixture of isopentenyl diphosphate (IPP) and dimethylallyl diphosphate (DMAPP). Acts in the terminal step of the DOXP/MEP pathway for isoprenoid precursor biosynthesis. This Aeromonas salmonicida (strain A449) protein is 4-hydroxy-3-methylbut-2-enyl diphosphate reductase.